The sequence spans 262 residues: Hydroxyethylthiazole kinase (262 aa).

M43 lines the substrate pocket. ATP contacts are provided by R118 and T164. A191 is a binding site for substrate.

It belongs to the Thz kinase family. Requires Mg(2+) as cofactor.

It catalyses the reaction 5-(2-hydroxyethyl)-4-methylthiazole + ATP = 4-methyl-5-(2-phosphooxyethyl)-thiazole + ADP + H(+). It functions in the pathway cofactor biosynthesis; thiamine diphosphate biosynthesis; 4-methyl-5-(2-phosphoethyl)-thiazole from 5-(2-hydroxyethyl)-4-methylthiazole: step 1/1. In terms of biological role, catalyzes the phosphorylation of the hydroxyl group of 4-methyl-5-beta-hydroxyethylthiazole (THZ). The chain is Hydroxyethylthiazole kinase from Cereibacter sphaeroides (strain ATCC 17025 / ATH 2.4.3) (Rhodobacter sphaeroides).